The chain runs to 225 residues: UPF0758 protein BB3258 (225 aa).

Positions 103-225 (ALANPDLVRR…TVSMAAQGHL (123 aa)) constitute an MPN domain. Positions 174, 176, and 187 each coordinate Zn(2+). The JAMM motif motif lies at 174 to 187 (HNHPGGTAAASAAD).

It belongs to the UPF0758 family.

The polypeptide is UPF0758 protein BB3258 (Bordetella bronchiseptica (strain ATCC BAA-588 / NCTC 13252 / RB50) (Alcaligenes bronchisepticus)).